The sequence spans 339 residues: Anthranilate phosphoribosyltransferase (339 aa).

5-phospho-alpha-D-ribose 1-diphosphate is bound by residues Gly81, 84 to 85, Ser89, 91 to 94, 109 to 117, and Ala121; these read GD, NVST, and KHGNRALSS. Gly81 contributes to the anthranilate binding site. Ser93 serves as a coordination point for Mg(2+). Asn112 contributes to the anthranilate binding site. Arg167 serves as a coordination point for anthranilate. 2 residues coordinate Mg(2+): Asp226 and Glu227.

This sequence belongs to the anthranilate phosphoribosyltransferase family. As to quaternary structure, homodimer. The cofactor is Mg(2+).

The enzyme catalyses N-(5-phospho-beta-D-ribosyl)anthranilate + diphosphate = 5-phospho-alpha-D-ribose 1-diphosphate + anthranilate. It participates in amino-acid biosynthesis; L-tryptophan biosynthesis; L-tryptophan from chorismate: step 2/5. Catalyzes the transfer of the phosphoribosyl group of 5-phosphorylribose-1-pyrophosphate (PRPP) to anthranilate to yield N-(5'-phosphoribosyl)-anthranilate (PRA). The chain is Anthranilate phosphoribosyltransferase from Rhodopseudomonas palustris (strain BisB18).